A 157-amino-acid chain; its full sequence is Small ribosomal subunit protein uS7 (157 aa).

The protein belongs to the universal ribosomal protein uS7 family. As to quaternary structure, part of the 30S ribosomal subunit. Contacts proteins S9 and S11.

In terms of biological role, one of the primary rRNA binding proteins, it binds directly to 16S rRNA where it nucleates assembly of the head domain of the 30S subunit. Is located at the subunit interface close to the decoding center, probably blocks exit of the E-site tRNA. In Albidiferax ferrireducens (strain ATCC BAA-621 / DSM 15236 / T118) (Rhodoferax ferrireducens), this protein is Small ribosomal subunit protein uS7.